Consider the following 158-residue polypeptide: Regulator of sigma D (158 aa).

This sequence belongs to the Rsd/AlgQ family. In terms of assembly, interacts with RpoD.

Its subcellular location is the cytoplasm. In terms of biological role, binds RpoD and negatively regulates RpoD-mediated transcription activation by preventing the interaction between the primary sigma factor RpoD with the catalytic core of the RNA polymerase and with promoter DNA. May be involved in replacement of the RNA polymerase sigma subunit from RpoD to RpoS during the transition from exponential growth to the stationary phase. The polypeptide is Regulator of sigma D (Escherichia coli (strain UTI89 / UPEC)).